A 584-amino-acid chain; its full sequence is MVAEVCSMPTASTVKKPFDLRSKMGKWCHHRFPCCRGSGKSNMGTSGDHDDSFMKMLRSKMGKCCRHCFPCCRGSGTSNVGTSGDHENSFMKMLRSKMGKWCCHCFPCCRGSGKSNVGAWGDYDHSAFMEPRYHIRREDLDKLHRAAWWGKVPRKDLIVMLRDTDMNKRDKEKRTALHLASANGNSEVVQLLLDRRCQLNVLDNKKRTALIKAIQCQEDECVLMLLEHGADRNIPDEYGNTALHYAIYNEDKLMAKALLLYGADIESKNKCGLTPLLLGVHEQKQQVVKFLIKKKANLNVLDRYGRTALILAVCCGSASIVNLLLEQNVDVSSQDLSGQTAREYAVSSHHHVICELLSDYKEKQMLKISSENSNPEQDLKLTSEEESQRLKVSENSQPEKMSQEPEINKDCDREVEEEIKKHGSNPVGLPENLTNGASAGNGDDGLIPQRRSRKPENQQFPDTENEEYHSDEQNDTRKQLSEEQNTGISQDEILTNKQKQIEVAEQKMNSELSLSHKKEEDLLRENSVLQEEIAMLRLELDETKHQNQLRENKILEEIESVKEKTDKLLRAMQLNEEALTKTNI.

ANK repeat units follow at residues 172-201, 205-234, 238-267, 271-300, 304-333, and 337-366; these read EKRT…QLNV, KKRT…DRNI, YGNT…DIES, CGLT…NLNV, YGRT…DVSS, and SGQT…KQML. The tract at residues 369 to 502 is disordered; the sequence is SSENSNPEQD…ILTNKQKQIE (134 aa). 3 stretches are compositionally biased toward basic and acidic residues: residues 377 to 392, 401 to 412, and 466 to 481; these read QDLK…RLKV, MSQEPEINKDCD, and EEYH…KQLS. Positions 482–498 are enriched in polar residues; the sequence is EEQNTGISQDEILTNKQ. A coiled-coil region spans residues 494-583; the sequence is LTNKQKQIEV…LNEEALTKTN (90 aa).

This sequence belongs to the POTE family. Expressed in prostate, ovary, testis, placenta and prostate cancer cell lines. Localizes to basal and terminal prostate epithelial cells.

The protein localises to the cell membrane. This chain is POTE ankyrin domain family member D (POTED), found in Homo sapiens (Human).